The sequence spans 148 residues: Snaclec flavocetin-A subunit beta (148 aa).

The first 23 residues, methionine 1–alanine 23, serve as a signal peptide directing secretion. Disulfide bonds link cysteine 27/cysteine 38, cysteine 55/cysteine 144, and cysteine 121/cysteine 136. The region spanning tyrosine 34 to lysine 145 is the C-type lectin domain.

The protein belongs to the snaclec family. In terms of assembly, tetramer of heterodimers of alpha and beta subunits (alphabeta)(4); disulfide-linked. In terms of tissue distribution, expressed by the venom gland.

Its subcellular location is the secreted. Functionally, strong platelet aggregation inhibitor. Binds specifically to platelet glycoprotein Ibalpha (GP1BA) with high affinity and inhibits vWF-dependent platelet aggregation. Has also been observed to induce small agglutinates in washed platelets by binding to GPIb. This is Snaclec flavocetin-A subunit beta from Protobothrops flavoviridis (Habu).